Consider the following 307-residue polypeptide: Dioxygenase swnH1 (307 aa).

Residues His-149, Asp-151, and His-227 each coordinate Fe cation.

The protein belongs to the PhyH family. As to quaternary structure, homodimer. Requires Fe cation as cofactor.

It participates in mycotoxin biosynthesis. Functionally, dioxygenase; part of the gene cluster that mediates the biosynthesis of swainsonine (SW), a cytotoxic fungal alkaloid and a potential cancer therapy drug. Swainsonine production occurs via a multibranched pathway and is dispensable for fungal colonization of plants and infection of insect hosts. The first step of swainsonine biosynthesis is the production of the precursor pipecolic acid (PA) via conversion of L-lysine (Lys) to 1-piperideine-6-carboxylate (P6C) by the aminotransferase swnA, the latter being further reduced to PA by the reductase swnR. The PKS-NRPS hybrid synthetase swnK uptakes and condensates PA and malonyl-CoA with and without skipping of the ketoreductase (KR) domain in order to produce 3 intermediates, 1-oxoindolizidine, (1S)-1-hydroxyindolizin, and (1R)-1-hydroxyindolizine; with the transisomer (1S)-1-hydroxyindolizin being predominant. The terminal thioester reductase (TE) domain of swnK is involved in reduction of the thioester bond to release the intermediate aldehydes. The oxidoreductase swnN could contribute to the reduction of 1-oxoindolizidine to (1S)-1-hydroxyindolizin and (1R)-1-hydroxyindolizine, contributing to the major route of SW production. The dioxygenase swnH2 would be responsible for the oxidization of (1R)-1-hydroxyindolizine into (1R,2S)-1,2-dihydroxyindolizine and of (1S)-1-hydroxyindolizin to yield both (1R,2S)-1,2-dihydroxyindolizine and (1S,2S)-1,2-dihydroxyindolizine. The dioxygenase swnH1 then performs the conversion of the 1,2-dihydroxyindolizine epimers to SW. This chain is Dioxygenase swnH1, found in Arthroderma benhamiae (strain ATCC MYA-4681 / CBS 112371) (Trichophyton mentagrophytes).